Here is a 101-residue protein sequence, read N- to C-terminus: Protein Tat (101 aa).

Positions 1 to 20 (MEPVDPSLEPWKHPGSQPKT) are disordered. Residues 1 to 24 (MEPVDPSLEPWKHPGSQPKTACTN) form an interaction with human CREBBP region. Residues 1-48 (MEPVDPSLEPWKHPGSQPKTACTNCYCKKCCLHCQVCFTTKGLGISYG) form a transactivation region. The Zn(2+) site is built by cysteine 22, cysteine 25, and cysteine 27. The segment at 22–37 (CTNCYCKKCCLHCQVC) is cysteine-rich. Position 28 is an N6-acetyllysine; by host PCAF (lysine 28). Zn(2+) contacts are provided by cysteine 30, histidine 33, cysteine 34, and cysteine 37. The interval 38-48 (FTTKGLGISYG) is core. The disordered stretch occupies residues 45–101 (ISYGRKKRRQRRRPPQDSQTHQVSLPKQPSSQQRGDPTGPKESKKKVERETETDPDN). Positions 48 to 57 (GRKKRRQRRR) are enriched in basic residues. Residues 49–57 (RKKRRQRRR) carry the Nuclear localization signal, RNA-binding (TAR), and protein transduction motif. Residues 49-86 (RKKRRQRRRPPQDSQTHQVSLPKQPSSQQRGDPTGPKE) form an interaction with the host capping enzyme RNGTT region. Residues lysine 50 and lysine 51 each carry the N6-acetyllysine; by host EP300 and GCN5L2 modification. An asymmetric dimethylarginine; by host PRMT6 mark is found at arginine 52 and arginine 53. Residues 61–79 (DSQTHQVSLPKQPSSQQRG) are compositionally biased toward polar residues. Lysine 71 participates in a covalent cross-link: Glycyl lysine isopeptide (Lys-Gly) (interchain with G-Cter in ubiquitin). Residues 78–80 (RGD) carry the Cell attachment site motif. Residues 83–101 (GPKESKKKVERETETDPDN) are compositionally biased toward basic and acidic residues.

It belongs to the lentiviruses Tat family. As to quaternary structure, interacts with host CCNT1. Associates with the P-TEFb complex composed at least of Tat, P-TEFb (CDK9 and CCNT1), TAR RNA, RNA Pol II. Recruits the HATs CREBBP, TAF1/TFIID, EP300, PCAF and GCN5L2. Interacts with host KAT5/Tip60; this interaction targets the latter to degradation. Interacts with the host deacetylase SIRT1. Interacts with host capping enzyme RNGTT; this interaction stimulates RNGTT. Binds to host KDR, and to the host integrins ITGAV/ITGB3 and ITGA5/ITGB1. Interacts with host KPNB1/importin beta-1 without previous binding to KPNA1/importin alpha-1. Interacts with EIF2AK2. Interacts with host nucleosome assembly protein NAP1L1; this interaction may be required for the transport of Tat within the nucleus, since the two proteins interact at the nuclear rim. Interacts with host C1QBP/SF2P32; this interaction involves lysine-acetylated Tat. Interacts with the host chemokine receptors CCR2, CCR3 and CXCR4. Interacts with host DPP4/CD26; this interaction may trigger an anti-proliferative effect. Interacts with host LDLR. Interacts with the host extracellular matrix metalloproteinase MMP1. Interacts with host PRMT6; this interaction mediates Tat's methylation. Interacts with, and is ubiquitinated by MDM2/Hdm2. Interacts with host PSMC3 and HTATIP2. Interacts with STAB1; this interaction may overcome SATB1-mediated repression of IL2 and IL2RA (interleukin) in T cells by binding to the same domain than HDAC1. Interacts (when acetylated) with human CDK13, thereby increasing HIV-1 mRNA splicing and promoting the production of the doubly spliced HIV-1 protein Nef. Interacts with host TBP; this interaction modulates the activity of transcriptional pre-initiation complex. Interacts with host RELA. Interacts with host PLSCR1; this interaction negatively regulates Tat transactivation activity by altering its subcellular distribution. Asymmetrical arginine methylation by host PRMT6 seems to diminish the transactivation capacity of Tat and affects the interaction with host CCNT1. Post-translationally, acetylation by EP300, CREBBP, GCN5L2/GCN5 and PCAF regulates the transactivation activity of Tat. EP300-mediated acetylation of Lys-50 promotes dissociation of Tat from the TAR RNA through the competitive binding to PCAF's bromodomain. In addition, the non-acetylated Tat's N-terminus can also interact with PCAF. PCAF-mediated acetylation of Lys-28 enhances Tat's binding to CCNT1. Lys-50 is deacetylated by SIRT1. In terms of processing, polyubiquitination by host MDM2 does not target Tat to degradation, but activates its transactivation function and fosters interaction with CCNT1 and TAR RNA. Phosphorylated by EIF2AK2 on serine and threonine residues adjacent to the basic region important for TAR RNA binding and function. Phosphorylation of Tat by EIF2AK2 is dependent on the prior activation of EIF2AK2 by dsRNA.

The protein resides in the host nucleus. Its subcellular location is the host nucleolus. The protein localises to the host cytoplasm. It localises to the secreted. Its function is as follows. Transcriptional activator that increases RNA Pol II processivity, thereby increasing the level of full-length viral transcripts. Recognizes a hairpin structure at the 5'-LTR of the nascent viral mRNAs referred to as the transactivation responsive RNA element (TAR) and recruits the cyclin T1-CDK9 complex (P-TEFb complex) that will in turn hyperphosphorylate the RNA polymerase II to allow efficient elongation. The CDK9 component of P-TEFb and other Tat-activated kinases hyperphosphorylate the C-terminus of RNA Pol II that becomes stabilized and much more processive. Other factors such as HTATSF1/Tat-SF1, SUPT5H/SPT5, and HTATIP2 are also important for Tat's function. Besides its effect on RNA Pol II processivity, Tat induces chromatin remodeling of proviral genes by recruiting the histone acetyltransferases (HATs) CREBBP, EP300 and PCAF to the chromatin. This also contributes to the increase in proviral transcription rate, especially when the provirus integrates in transcriptionally silent region of the host genome. To ensure maximal activation of the LTR, Tat mediates nuclear translocation of NF-kappa-B by interacting with host RELA. Through its interaction with host TBP, Tat may also modulate transcription initiation. Tat can reactivate a latently infected cell by penetrating in it and transactivating its LTR promoter. In the cytoplasm, Tat is thought to act as a translational activator of HIV-1 mRNAs. Extracellular circulating Tat can be endocytosed by surrounding uninfected cells via the binding to several surface receptors such as CD26, CXCR4, heparan sulfate proteoglycans (HSPG) or LDLR. Neurons are rarely infected, but they internalize Tat via their LDLR. Through its interaction with nuclear HATs, Tat is potentially able to control the acetylation-dependent cellular gene expression. Modulates the expression of many cellular genes involved in cell survival, proliferation or in coding for cytokines or cytokine receptors. Tat plays a role in T-cell and neurons apoptosis. Tat induced neurotoxicity and apoptosis probably contribute to neuroAIDS. Circulating Tat also acts as a chemokine-like and/or growth factor-like molecule that binds to specific receptors on the surface of the cells, affecting many cellular pathways. In the vascular system, Tat binds to ITGAV/ITGB3 and ITGA5/ITGB1 integrins dimers at the surface of endothelial cells and competes with bFGF for heparin-binding sites, leading to an excess of soluble bFGF. This Homo sapiens (Human) protein is Protein Tat.